Consider the following 131-residue polypeptide: Small ribosomal subunit protein uS8 (131 aa).

The protein belongs to the universal ribosomal protein uS8 family. As to quaternary structure, part of the 30S ribosomal subunit. Contacts proteins S5 and S12.

Its function is as follows. One of the primary rRNA binding proteins, it binds directly to 16S rRNA central domain where it helps coordinate assembly of the platform of the 30S subunit. In Albidiferax ferrireducens (strain ATCC BAA-621 / DSM 15236 / T118) (Rhodoferax ferrireducens), this protein is Small ribosomal subunit protein uS8.